Here is a 319-residue protein sequence, read N- to C-terminus: Acetyl-coenzyme A carboxylase carboxyl transferase subunit alpha (319 aa).

The CoA carboxyltransferase C-terminal domain occupies Asn-35–Asp-296.

The protein belongs to the AccA family. As to quaternary structure, acetyl-CoA carboxylase is a heterohexamer composed of biotin carboxyl carrier protein (AccB), biotin carboxylase (AccC) and two subunits each of ACCase subunit alpha (AccA) and ACCase subunit beta (AccD).

It localises to the cytoplasm. It catalyses the reaction N(6)-carboxybiotinyl-L-lysyl-[protein] + acetyl-CoA = N(6)-biotinyl-L-lysyl-[protein] + malonyl-CoA. Its pathway is lipid metabolism; malonyl-CoA biosynthesis; malonyl-CoA from acetyl-CoA: step 1/1. Component of the acetyl coenzyme A carboxylase (ACC) complex. First, biotin carboxylase catalyzes the carboxylation of biotin on its carrier protein (BCCP) and then the CO(2) group is transferred by the carboxyltransferase to acetyl-CoA to form malonyl-CoA. The protein is Acetyl-coenzyme A carboxylase carboxyl transferase subunit alpha of Salmonella agona (strain SL483).